The following is a 427-amino-acid chain: 3-phosphoshikimate 1-carboxyvinyltransferase (427 aa).

The 3-phosphoshikimate site is built by Lys-22, Ser-23, and Arg-27. Lys-22 serves as a coordination point for phosphoenolpyruvate. Gly-96 and Arg-124 together coordinate phosphoenolpyruvate. Ser-169, Ser-170, Gln-171, Ser-197, Asp-313, Asn-336, and Lys-340 together coordinate 3-phosphoshikimate. Gln-171 contacts phosphoenolpyruvate. The active-site Proton acceptor is the Asp-313. Arg-344, Arg-386, and Lys-411 together coordinate phosphoenolpyruvate.

The protein belongs to the EPSP synthase family. In terms of assembly, monomer.

The protein resides in the cytoplasm. It catalyses the reaction 3-phosphoshikimate + phosphoenolpyruvate = 5-O-(1-carboxyvinyl)-3-phosphoshikimate + phosphate. The protein operates within metabolic intermediate biosynthesis; chorismate biosynthesis; chorismate from D-erythrose 4-phosphate and phosphoenolpyruvate: step 6/7. Its function is as follows. Catalyzes the transfer of the enolpyruvyl moiety of phosphoenolpyruvate (PEP) to the 5-hydroxyl of shikimate-3-phosphate (S3P) to produce enolpyruvyl shikimate-3-phosphate and inorganic phosphate. This chain is 3-phosphoshikimate 1-carboxyvinyltransferase, found in Salmonella schwarzengrund (strain CVM19633).